A 714-amino-acid polypeptide reads, in one-letter code: Polyribonucleotide nucleotidyltransferase (714 aa).

The Mg(2+) site is built by D484 and D490. The 60-residue stretch at 551–610 (PRIMVINIAPEKVREVIGPGGKVINKIIDETGVKIDTEDDGKITVAGENTESAQRAIDMI) folds into the KH domain. Positions 620-688 (GEKYLGRVTK…DQGKMTLSRK (69 aa)) constitute an S1 motif domain. Residues 685–714 (LSRKALLPKPERKEKKNFDKKSEDQNSEDK) form a disordered region. Residues 693-714 (KPERKEKKNFDKKSEDQNSEDK) show a composition bias toward basic and acidic residues.

It belongs to the polyribonucleotide nucleotidyltransferase family. Mg(2+) serves as cofactor.

The protein localises to the cytoplasm. The catalysed reaction is RNA(n+1) + phosphate = RNA(n) + a ribonucleoside 5'-diphosphate. Its function is as follows. Involved in mRNA degradation. Catalyzes the phosphorolysis of single-stranded polyribonucleotides processively in the 3'- to 5'-direction. This Finegoldia magna (strain ATCC 29328 / DSM 20472 / WAL 2508) (Peptostreptococcus magnus) protein is Polyribonucleotide nucleotidyltransferase.